Reading from the N-terminus, the 243-residue chain is Isoprenyl transferase 2 (243 aa).

D23 is an active-site residue. D23 serves as a coordination point for Mg(2+). Substrate-binding positions include 24-27 (GNGR), W28, R36, H40, and 68-70 (STE). N71 acts as the Proton acceptor in catalysis. Substrate contacts are provided by residues W72, R74, R191, and 197-199 (RTS). Residue E210 participates in Mg(2+) binding.

Belongs to the UPP synthase family. Homodimer. The cofactor is Mg(2+).

Catalyzes the condensation of isopentenyl diphosphate (IPP) with allylic pyrophosphates generating different type of terpenoids. This Corynebacterium efficiens (strain DSM 44549 / YS-314 / AJ 12310 / JCM 11189 / NBRC 100395) protein is Isoprenyl transferase 2.